A 388-amino-acid chain; its full sequence is Succinate--CoA ligase [ADP-forming] subunit beta (388 aa).

The ATP-grasp domain occupies 9 to 245; the sequence is KELLAGYGLP…KSQENERELK (237 aa). ATP is bound by residues lysine 46, 53-55, glutamate 100, tyrosine 103, and glutamate 108; that span reads GRG. Residues asparagine 200 and aspartate 214 each contribute to the Mg(2+) site. Substrate contacts are provided by residues asparagine 265 and 322 to 324; that span reads GIV.

Belongs to the succinate/malate CoA ligase beta subunit family. As to quaternary structure, heterotetramer of two alpha and two beta subunits. The cofactor is Mg(2+).

The catalysed reaction is succinate + ATP + CoA = succinyl-CoA + ADP + phosphate. It catalyses the reaction GTP + succinate + CoA = succinyl-CoA + GDP + phosphate. It participates in carbohydrate metabolism; tricarboxylic acid cycle; succinate from succinyl-CoA (ligase route): step 1/1. In terms of biological role, succinyl-CoA synthetase functions in the citric acid cycle (TCA), coupling the hydrolysis of succinyl-CoA to the synthesis of either ATP or GTP and thus represents the only step of substrate-level phosphorylation in the TCA. The beta subunit provides nucleotide specificity of the enzyme and binds the substrate succinate, while the binding sites for coenzyme A and phosphate are found in the alpha subunit. The chain is Succinate--CoA ligase [ADP-forming] subunit beta from Neisseria meningitidis serogroup C (strain 053442).